We begin with the raw amino-acid sequence, 66 residues long: Cold shock-like protein CspD (66 aa).

The 60-residue stretch at 4–63 (GKVKWFNSEKGFGFIEVEGGDDVFVHFSAIQGDGFKTLEEGQEVSFEIVEGNRGPQAANV) folds into the CSD domain.

As to quaternary structure, homodimer.

The protein localises to the cytoplasm. This Bacillus anthracis protein is Cold shock-like protein CspD (cspD).